The primary structure comprises 140 residues: D-ribose pyranase (140 aa).

The Proton donor role is filled by histidine 20. Residues aspartate 28, histidine 99, and 121–123 (YSS) each bind substrate.

It belongs to the RbsD / FucU family. RbsD subfamily. Homodecamer.

Its subcellular location is the cytoplasm. The catalysed reaction is beta-D-ribopyranose = beta-D-ribofuranose. It participates in carbohydrate metabolism; D-ribose degradation; D-ribose 5-phosphate from beta-D-ribopyranose: step 1/2. Functionally, catalyzes the interconversion of beta-pyran and beta-furan forms of D-ribose. This is D-ribose pyranase from Pseudothermotoga lettingae (strain ATCC BAA-301 / DSM 14385 / NBRC 107922 / TMO) (Thermotoga lettingae).